A 182-amino-acid polypeptide reads, in one-letter code: MTVQVAVALTKKTQQEQPMINERIHFPRVRVVDTDGSQLGIMSSQEAIAIAREKELDLVLVSDKADPPVCKIIDYGKFRFEQEKKAREARKKQHTSDVKEVKMRYKIEEHDYNVCINRAERFLKAGDKVKATVTFRGREIQHSHLAEELLNRMANDLQAVAEVQQAPKQEGRNMIMFLAPKR.

This sequence belongs to the IF-3 family. As to quaternary structure, monomer.

Its subcellular location is the cytoplasm. In terms of biological role, IF-3 binds to the 30S ribosomal subunit and shifts the equilibrium between 70S ribosomes and their 50S and 30S subunits in favor of the free subunits, thus enhancing the availability of 30S subunits on which protein synthesis initiation begins. The protein is Translation initiation factor IF-3 of Thermosynechococcus vestitus (strain NIES-2133 / IAM M-273 / BP-1).